The primary structure comprises 148 residues: Putative adenylate kinase (148 aa).

Gly9, Gly11, Lys12, Ser13, and Thr14 together coordinate ATP. Positions 28–44 are NMP; that stretch reads EGNALAVKYGCLSGDEV. The interval 91 to 101 is LID; it reads DRGYSPEKIDE. An ATP-binding site is contributed by Arg92.

Belongs to the adenylate kinase family. AK6 subfamily. Interacts with uS11. Not a structural component of 40S pre-ribosomes, but transiently interacts with them by binding to uS11.

The enzyme catalyses AMP + ATP = 2 ADP. It carries out the reaction ATP + H2O = ADP + phosphate + H(+). Its function is as follows. Broad-specificity nucleoside monophosphate (NMP) kinase that catalyzes the reversible transfer of the terminal phosphate group between nucleoside triphosphates and monophosphates. Also has ATPase activity. Involved in the late maturation steps of the 30S ribosomal particles, specifically 16S rRNA maturation. While NMP activity is not required for ribosome maturation, ATPase activity is. Associates transiently with small ribosomal subunit protein uS11. ATP hydrolysis breaks the interaction with uS11. May temporarily remove uS11 from the ribosome to enable a conformational change of the ribosomal RNA that is needed for the final maturation step of the small ribosomal subunit. The sequence is that of Putative adenylate kinase from Thermoplasma acidophilum (strain ATCC 25905 / DSM 1728 / JCM 9062 / NBRC 15155 / AMRC-C165).